The primary structure comprises 1150 residues: Fl(2)d-associated complex component (1150 aa).

Residues methionine 1–arginine 10 are compositionally biased toward basic and acidic residues. Disordered regions lie at residues methionine 1 to arginine 444, glutamine 477 to leucine 710, alanine 833 to asparagine 914, and lysine 1034 to proline 1053. Over residues arginine 11–alanine 20 the composition is skewed to basic residues. Residues threonine 21 to serine 44 show a composition bias toward low complexity. Residues glycine 47 to serine 69 show a composition bias toward gly residues. A compositionally biased stretch (basic residues) spans glycine 72–arginine 97. Positions arginine 98 to proline 107 are enriched in low complexity. Basic residues-rich tracts occupy residues serine 110 to alanine 144 and alanine 162 to alanine 175. Residues lysine 122–alanine 147 adopt a coiled-coil conformation. Residues alanine 176 to arginine 199 are compositionally biased toward basic and acidic residues. Low complexity predominate over residues serine 202–threonine 215. Residues proline 269–glycine 347 adopt a coiled-coil conformation. Composition is skewed to basic and acidic residues over residues serine 270 to arginine 414, tyrosine 428 to arginine 444, and proline 492 to glutamate 529. The segment covering alanine 537 to proline 558 has biased composition (gly residues). Composition is skewed to basic and acidic residues over residues glutamate 589–aspartate 611 and tryptophan 630–arginine 640. Residues proline 660–alanine 669 are compositionally biased toward pro residues. Residues glycine 693–glycine 702 are compositionally biased toward basic and acidic residues. The span at glutamine 851 to serine 861 shows a compositional bias: low complexity. Residues glutamate 879–aspartate 889 show a composition bias toward acidic residues. Positions isoleucine 890–leucine 903 are enriched in basic and acidic residues. Residues threonine 905–asparagine 914 are compositionally biased toward acidic residues.

It belongs to the ZC3H13 family. In terms of assembly, component of the WMM complex, a N6-methyltransferase complex composed of a catalytic subcomplex, named MAC, and of an associated subcomplex, named MACOM. The MAC subcomplex is composed of Ime4/Mettl3 and Mettl14. The MACOM subcomplex is composed of fl(2)d, Flacc/Xio, Hakai, vir, and, in some cases of nito. As to expression, widely expressed during embryogenesis but shows enrichment in the neuroectoderm.

It is found in the nucleus. Functionally, associated component of the WMM complex, a complex that mediates N6-methyladenosine (m6A) methylation of mRNAs, a modification that plays a role in the efficiency of mRNA splicing and is required for sex determination. In the WMM complex, acts as a key regulator of m6A methylation by bridging fl(2)d to the RNA-binding component nito. Required for sex determination and dosage compensation via Sxl alternative splicing: m6A methylation acts as a key regulator of Sxl pre-mRNA and promotes female-specific alternative splicing of Sxl, which determines female physiognomy. The sequence is that of Fl(2)d-associated complex component from Drosophila melanogaster (Fruit fly).